We begin with the raw amino-acid sequence, 501 residues long: Orsellinic acid/F9775 biosynthesis cluster protein D (501 aa).

Residues 137–189 (EVTPTTEDEDDEENESENDEEEGDVDLEEQEDDNGGRQSTTVTTSPGPSAPSV) form a disordered region. Positions 142–169 (TEDEDDEENESENDEEEGDVDLEEQEDD) are enriched in acidic residues. Over residues 172 to 183 (GRQSTTVTTSPG) the composition is skewed to polar residues.

Part of the gene cluster that mediates the biosynthesis of orsellinic acid, as well as of the cathepsin K inhibitors F9775 A and F9775 B. The non-reducing polyketide synthase orsA produces orsellinic acid by condensing acetyl-CoA with 3 malonyl-CoA units. Further modifications by the decarboxylase orsB and the tyrosinase-like protein orsC lead to the production of F9775 A and F9775 B. The functions of orsD and orsE remain unclear since only orsB and orsC are required to convert orsellinic acid into F9775 A and F9775 B. The protein is Orsellinic acid/F9775 biosynthesis cluster protein D of Emericella nidulans (strain FGSC A4 / ATCC 38163 / CBS 112.46 / NRRL 194 / M139) (Aspergillus nidulans).